The primary structure comprises 345 residues: Phosphate acyltransferase (345 aa).

This sequence belongs to the PlsX family. As to quaternary structure, homodimer. Probably interacts with PlsY.

Its subcellular location is the cytoplasm. It catalyses the reaction a fatty acyl-[ACP] + phosphate = an acyl phosphate + holo-[ACP]. Its pathway is lipid metabolism; phospholipid metabolism. In terms of biological role, catalyzes the reversible formation of acyl-phosphate (acyl-PO(4)) from acyl-[acyl-carrier-protein] (acyl-ACP). This enzyme utilizes acyl-ACP as fatty acyl donor, but not acyl-CoA. This chain is Phosphate acyltransferase, found in Limosilactobacillus fermentum (strain NBRC 3956 / LMG 18251) (Lactobacillus fermentum).